The following is a 233-amino-acid chain: Pathogenesis-related thaumatin-like protein 3.2 (233 aa).

Residues 1–22 (MARAMHTVWIALVPTLFVFLQG) form the signal peptide. 8 disulfide bridges follow: C36-C232, C77-C87, C92-C98, C145-C221, C151-C204, C159-C169, C173-C182, and C183-C191. The N-linked (GlcNAc...) asparagine glycan is linked to N195.

Belongs to the thaumatin family. Strongly expressed in roots and in female and male strobili, and, to a lower extent, in cotyledons, leaves, stems and pollen grains.

Functionally, may be involved in disease resistance. This Cryptomeria japonica (Japanese cedar) protein is Pathogenesis-related thaumatin-like protein 3.2.